A 167-amino-acid polypeptide reads, in one-letter code: uncharacterized protein (167 aa).

Residues 5 to 27 (LILLTFVSFVFSKTFYYDVYVFF) traverse the membrane as a helical segment.

It is found in the membrane. This is an uncharacterized protein from Aquifex aeolicus (strain VF5).